The sequence spans 133 residues: Small ribosomal subunit protein uS8 (133 aa).

This sequence belongs to the universal ribosomal protein uS8 family. In terms of assembly, part of the 30S ribosomal subunit. Contacts proteins S5 and S12.

One of the primary rRNA binding proteins, it binds directly to 16S rRNA central domain where it helps coordinate assembly of the platform of the 30S subunit. The sequence is that of Small ribosomal subunit protein uS8 from Koribacter versatilis (strain Ellin345).